The primary structure comprises 495 residues: Thioredoxin reductase SEP1 (495 aa).

Residue 37–54 coordinates FAD; sequence DFVKPSPPGTTWGLGGTC. Residues C54 and C59 are joined by a disulfide bond. The active-site Proton acceptor is H468. The cysteinyl-selenocysteine (Cys-Sec) cross-link spans 493–494; that stretch reads CU. U494 is a non-standard amino acid (selenocysteine).

Belongs to the class-I pyridine nucleotide-disulfide oxidoreductase family. As to quaternary structure, homodimer. Requires FAD as cofactor. Post-translationally, the N-terminus is blocked.

The catalysed reaction is [thioredoxin]-dithiol + NADP(+) = [thioredoxin]-disulfide + NADPH + H(+). Its activity is regulated as follows. Activity was very low in selenium-depleted cells, but increased 4-fold to the same level as in selenium-sufficient cells for 70 hours after the addition of 10 nm selenite. The protein is Thioredoxin reductase SEP1 (SEP1) of Emiliania huxleyi (Coccolithophore).